Consider the following 371-residue polypeptide: 4-hydroxy-3-methylbut-2-en-1-yl diphosphate synthase (flavodoxin) (371 aa).

Positions 269, 272, 304, and 311 each coordinate [4Fe-4S] cluster.

It belongs to the IspG family. It depends on [4Fe-4S] cluster as a cofactor.

The enzyme catalyses (2E)-4-hydroxy-3-methylbut-2-enyl diphosphate + oxidized [flavodoxin] + H2O + 2 H(+) = 2-C-methyl-D-erythritol 2,4-cyclic diphosphate + reduced [flavodoxin]. Its pathway is isoprenoid biosynthesis; isopentenyl diphosphate biosynthesis via DXP pathway; isopentenyl diphosphate from 1-deoxy-D-xylulose 5-phosphate: step 5/6. In terms of biological role, converts 2C-methyl-D-erythritol 2,4-cyclodiphosphate (ME-2,4cPP) into 1-hydroxy-2-methyl-2-(E)-butenyl 4-diphosphate. The sequence is that of 4-hydroxy-3-methylbut-2-en-1-yl diphosphate synthase (flavodoxin) from Acinetobacter baumannii (strain AB307-0294).